A 339-amino-acid polypeptide reads, in one-letter code: Protein H339R (339 aa).

This sequence belongs to the asfivirus H339R family. As to quaternary structure, interacts with host NACA (alpha chain of nascent polypeptide-associated complex).

It is found in the host cytoplasm. Its subcellular location is the host nucleus. This is Protein H339R from African swine fever virus (isolate Tick/South Africa/Pretoriuskop Pr4/1996) (ASFV).